Reading from the N-terminus, the 235-residue chain is Segregation and condensation protein A (235 aa).

It belongs to the ScpA family. As to quaternary structure, component of a cohesin-like complex composed of ScpA, ScpB and the Smc homodimer, in which ScpA and ScpB bind to the head domain of Smc. The presence of the three proteins is required for the association of the complex with DNA.

Its subcellular location is the cytoplasm. In terms of biological role, participates in chromosomal partition during cell division. May act via the formation of a condensin-like complex containing Smc and ScpB that pull DNA away from mid-cell into both cell halves. This is Segregation and condensation protein A from Streptococcus equi subsp. zooepidemicus (strain H70).